Reading from the N-terminus, the 440-residue chain is Thymidine phosphorylase (440 aa).

It belongs to the thymidine/pyrimidine-nucleoside phosphorylase family. As to quaternary structure, homodimer.

It carries out the reaction thymidine + phosphate = 2-deoxy-alpha-D-ribose 1-phosphate + thymine. It participates in pyrimidine metabolism; dTMP biosynthesis via salvage pathway; dTMP from thymine: step 1/2. Its function is as follows. The enzymes which catalyze the reversible phosphorolysis of pyrimidine nucleosides are involved in the degradation of these compounds and in their utilization as carbon and energy sources, or in the rescue of pyrimidine bases for nucleotide synthesis. This Proteus mirabilis (strain HI4320) protein is Thymidine phosphorylase.